The chain runs to 78 residues: Large ribosomal subunit protein bL28 (78 aa).

It belongs to the bacterial ribosomal protein bL28 family.

The polypeptide is Large ribosomal subunit protein bL28 (Rippkaea orientalis (strain PCC 8801 / RF-1) (Cyanothece sp. (strain PCC 8801))).